Reading from the N-terminus, the 1273-residue chain is Probable methionine synthase (1273 aa).

The Hcy-binding domain occupies 7–327 (FKELADIAKE…DHINAMYKAV (321 aa)). Residues Cys-249, Cys-312, and Cys-313 each coordinate Zn(2+). The Pterin-binding domain occupies 360 to 621 (FVNIGERCNV…IDKPLLQLLE (262 aa)). Residues 652 to 749 (KTDEWRNTSV…FMDAERQANI (98 aa)) enclose the B12-binding N-terminal domain. Methylcob(III)alamin contacts are provided by residues Glu-699, 772 to 776 (GDVHD), His-775, Ser-820, Thr-824, and Ala-876. The B12-binding domain occupies 762 to 897 (QGTVVIATVK…DMTVRDAFLQ (136 aa)). The AdoMet activation domain occupies 927–1273 (SLKDRRFVAL…LSPIIGYELD (347 aa)). S-adenosyl-L-methionine contacts are provided by residues Asp-977, Arg-1171, and 1225–1226 (YF).

This sequence belongs to the vitamin-B12 dependent methionine synthase family. Methylcob(III)alamin is required as a cofactor. The cofactor is Zn(2+).

The enzyme catalyses (6S)-5-methyl-5,6,7,8-tetrahydrofolate + L-homocysteine = (6S)-5,6,7,8-tetrahydrofolate + L-methionine. The protein operates within amino-acid biosynthesis; L-methionine biosynthesis via de novo pathway; L-methionine from L-homocysteine (MetH route): step 1/1. Catalyzes the transfer of a methyl group from methyl-cobalamin to homocysteine, yielding enzyme-bound cob(I)alamin and methionine. Subsequently, remethylates the cofactor using methyltetrahydrofolate. In Caenorhabditis briggsae, this protein is Probable methionine synthase (metr-1).